We begin with the raw amino-acid sequence, 595 residues long: Protein LUTEIN DEFICIENT 5, chloroplastic (595 aa).

A chloroplast-targeting transit peptide spans 1–28 (MAMAFPLSYTPTITVKPVTYSRRSNFVV). C516 contributes to the heme binding site.

It belongs to the cytochrome P450 family. It depends on heme as a cofactor.

It is found in the plastid. Its subcellular location is the chloroplast. Its function is as follows. Heme-containing cytochrome P450 involved in the biosynthesis of xanthophylls. Specific for beta-ring hydroxylation of alpha- and beta-carotene. Also has a low activity toward the epsilon-rings of alpha-carotene. The beta-ring of alpha-carotene is the preferred substrate in planta. This is Protein LUTEIN DEFICIENT 5, chloroplastic (CYP97A3) from Arabidopsis thaliana (Mouse-ear cress).